A 445-amino-acid chain; its full sequence is POU domain, class 5, transcription factor 1.2 (445 aa).

2 stretches are compositionally biased toward polar residues: residues 76 to 88 and 164 to 182; these read SANQLGISGQGNP and IFTSSPDKSGESGISSLDN. Disordered regions lie at residues 76–116 and 139–227; these read SANQ…PSLP and TTVV…GEME. A compositionally biased stretch (low complexity) spans 183-200; the sequence is SRCSSATSSSSGGTNVGT. The region spanning 218–292 is the POU-specific domain; it reads EEAPNSGEME…LLRSWLHEVE (75 aa). Residues 312 to 371 constitute a DNA-binding region (homeobox); it reads KRKHRTSIENNVKCTLENYFMQCSKPSAQEIAQIARELNMEKDVVRVWFCNRRQKGKRQV.

This sequence belongs to the POU transcription factor family. Class-5 subfamily. In terms of assembly, interacts with the transcription factors tcf7l1/tcf3 and vegt. In terms of tissue distribution, initially (stage 9) expressed in all regions of the embryo, becoming localized to the ventroposterior regions by early neurula stages. In adults, expressed at a low level in the brain.

It is found in the nucleus. In terms of biological role, transcription factor that binds to the octamer motif (5'-ATTTGCAT-3'). Antagonizes the activity of nodal/activin signaling during gastrulation to suppress mesendoderm formation. The polypeptide is POU domain, class 5, transcription factor 1.2 (pou5f1.2) (Xenopus laevis (African clawed frog)).